Consider the following 242-residue polypeptide: Aquaporin (242 aa).

Residues 1–11 lie on the Cytoplasmic side of the membrane; the sequence is MNTSTKLICQK. Residues 12-32 form a helical membrane-spanning segment; the sequence is LFAEMLCSCIFGFAVYSAILN. Residues 33–39 are Extracellular-facing; sequence TKASNSS. The helical transmembrane segment at 40 to 60 threads the bilayer; it reads ISSTTVGLTVCFSSISLIYTF. Residues 61 to 83 are Cytoplasmic-facing; that stretch reads CDHSVAHFNPAITIAAICTGKLD. Residues 69 to 71 carry the NPA motif; sequence NPA. The helical transmembrane segment at 84-104 threads the bilayer; it reads ILLGIGYVIAQLIGFILATLL. At 105-133 the chain is on the extracellular side; that stretch reads TVVCFPYGYLKTMEFIASARISDDISTVN. Residues 134-154 form a helical membrane-spanning segment; the sequence is LFFTEFILSFILVFIAFEVGI. Residues 155-175 are Cytoplasmic-facing; it reads NAIREPGVTLFVGIKQIDRSK. Residues 176 to 196 form a helical membrane-spanning segment; it reads FAPLTIGITLGFLAFLASTTS. Residues 197–217 are Extracellular-facing; that stretch reads GGAFNPGIVWGPAIMGGNFDD. Residues 201–203 carry the NPG motif; it reads NPG. The helical transmembrane segment at 218 to 238 threads the bilayer; the sequence is FVIYIISELSGGLLGAFIQVF. Residues 239–242 lie on the Cytoplasmic side of the membrane; that stretch reads LLFK.

This sequence belongs to the MIP/aquaporin (TC 1.A.8) family.

The protein localises to the cell membrane. In terms of biological role, water channel required to facilitate the transport of water across membranes. Involved in osmotolerance. This Enterocytozoon bieneusi (strain H348) (Microsporidian parasite) protein is Aquaporin (AQP).